The primary structure comprises 190 residues: Hypoxanthine/guanine phosphoribosyltransferase (190 aa).

The protein belongs to the purine/pyrimidine phosphoribosyltransferase family. Archaeal HPRT subfamily. Homodimer.

It localises to the cytoplasm. It catalyses the reaction IMP + diphosphate = hypoxanthine + 5-phospho-alpha-D-ribose 1-diphosphate. It carries out the reaction GMP + diphosphate = guanine + 5-phospho-alpha-D-ribose 1-diphosphate. It participates in purine metabolism; IMP biosynthesis via salvage pathway; IMP from hypoxanthine: step 1/1. In terms of biological role, catalyzes a salvage reaction resulting in the formation of IMP that is energically less costly than de novo synthesis. The chain is Hypoxanthine/guanine phosphoribosyltransferase from Methanohalophilus mahii (strain ATCC 35705 / DSM 5219 / SLP).